Reading from the N-terminus, the 463-residue chain is MLTKTKKEEKEFQKDSTTRSYWITTFGCQMNKADSERMAGTLEKMGYTRADDELNADLVLYNTCTIRDNAEHKVYSFLGRQAKRKHKIPSLKLVVAGCLAQQEGESLLRRVPELDLVMGPQHVNNLENLLGKVDLGNQVAATEETFISEDITNARRESSICGWVNIIYGCNERCSYCVVPSVRGKEQSRYPNAIKSEIQKLADDNFKEITLLGQNIDAYGRDLPGTTKEGRKENTLTDLLYYIHDINGISRIRFATSHPRYFSKRLIQACYELDKVCEHFHIPFQSGNDEILKQMSRGYNIKKYKNIIDNIRSLMPDASITADAIVAFPGETEQQYQDTLKLISDIGFDQVNTAAYSPRPNTPAAVWSNQLSEEVKKTRLQEINALVEKTARNRNQRYINNIESVLIEGLNPKNSSQIMGRTRTNRLTFVKIPKNIQFNFSLGDEIDVRINEARPFSLTGELC.

Residues 19-135 (RSYWITTFGC…LENLLGKVDL (117 aa)) form the MTTase N-terminal domain. Residues Cys28, Cys64, Cys98, Cys170, Cys174, and Cys177 each contribute to the [4Fe-4S] cluster site. The Radical SAM core domain occupies 156-393 (RESSICGWVN…NALVEKTARN (238 aa)). The TRAM domain maps to 396–463 (QRYINNIESV…RPFSLTGELC (68 aa)).

Belongs to the methylthiotransferase family. MiaB subfamily. Monomer. The cofactor is [4Fe-4S] cluster.

It localises to the cytoplasm. The catalysed reaction is N(6)-dimethylallyladenosine(37) in tRNA + (sulfur carrier)-SH + AH2 + 2 S-adenosyl-L-methionine = 2-methylsulfanyl-N(6)-dimethylallyladenosine(37) in tRNA + (sulfur carrier)-H + 5'-deoxyadenosine + L-methionine + A + S-adenosyl-L-homocysteine + 2 H(+). In terms of biological role, catalyzes the methylthiolation of N6-(dimethylallyl)adenosine (i(6)A), leading to the formation of 2-methylthio-N6-(dimethylallyl)adenosine (ms(2)i(6)A) at position 37 in tRNAs that read codons beginning with uridine. The sequence is that of tRNA-2-methylthio-N(6)-dimethylallyladenosine synthase from Prochlorococcus marinus (strain MIT 9312).